The primary structure comprises 101 residues: Ferredoxin-3 (101 aa).

2 4Fe-4S ferredoxin-type domains span residues Tyr-17–Leu-46 and Lys-70–Leu-100. [4Fe-4S] cluster is bound by residues Cys-26, Cys-29, Cys-32, Cys-36, Cys-80, Cys-83, Cys-86, and Cys-90.

As to quaternary structure, homodimer. [4Fe-4S] cluster serves as cofactor.

Functionally, ferredoxins are iron-sulfur proteins that transfer electrons in a wide variety of metabolic reactions. The polypeptide is Ferredoxin-3 (fdxB) (Rhodobacter capsulatus (Rhodopseudomonas capsulata)).